Here is a 763-residue protein sequence, read N- to C-terminus: Translation initiation factor IF-2 (763 aa).

The segment at lysine 52 to lysine 178 is disordered. Basic and acidic residues predominate over residues serine 65–glutamate 82. Polar residues predominate over residues threonine 86 to asparagine 96. 2 stretches are compositionally biased toward basic and acidic residues: residues arginine 105–aspartate 116 and lysine 123–lysine 135. Positions lysine 136–lysine 145 are enriched in basic residues. Residues asparagine 146 to asparagine 161 are compositionally biased toward low complexity. The segment covering lysine 162–lysine 178 has biased composition (basic and acidic residues). The region spanning glutamate 265 to lysine 434 is the tr-type G domain. Positions glycine 274 to threonine 281 are G1. Glycine 274–threonine 281 contacts GTP. The G2 stretch occupies residues glycine 299 to histidine 303. The tract at residues aspartate 320–glycine 323 is G3. Residues aspartate 320 to histidine 324 and asparagine 374 to aspartate 377 each bind GTP. The G4 stretch occupies residues asparagine 374–aspartate 377. The interval serine 410 to arginine 412 is G5.

It belongs to the TRAFAC class translation factor GTPase superfamily. Classic translation factor GTPase family. IF-2 subfamily.

The protein localises to the cytoplasm. One of the essential components for the initiation of protein synthesis. Protects formylmethionyl-tRNA from spontaneous hydrolysis and promotes its binding to the 30S ribosomal subunits. Also involved in the hydrolysis of GTP during the formation of the 70S ribosomal complex. The sequence is that of Translation initiation factor IF-2 from Finegoldia magna (strain ATCC 29328 / DSM 20472 / WAL 2508) (Peptostreptococcus magnus).